The following is a 157-amino-acid chain: 2-C-methyl-D-erythritol 2,4-cyclodiphosphate synthase (157 aa).

A divalent metal cation is bound by residues Asp8 and His10. 4-CDP-2-C-methyl-D-erythritol 2-phosphate is bound by residues 8–10 (DVH) and 34–35 (HS). His42 is a binding site for a divalent metal cation. Residues 56–58 (DIG), 61–65 (FPDTD), 100–106 (AQAPKMA), 132–135 (TTTE), Phe139, and Arg142 each bind 4-CDP-2-C-methyl-D-erythritol 2-phosphate.

The protein belongs to the IspF family. As to quaternary structure, homotrimer. It depends on a divalent metal cation as a cofactor.

The catalysed reaction is 4-CDP-2-C-methyl-D-erythritol 2-phosphate = 2-C-methyl-D-erythritol 2,4-cyclic diphosphate + CMP. It participates in isoprenoid biosynthesis; isopentenyl diphosphate biosynthesis via DXP pathway; isopentenyl diphosphate from 1-deoxy-D-xylulose 5-phosphate: step 4/6. Functionally, involved in the biosynthesis of isopentenyl diphosphate (IPP) and dimethylallyl diphosphate (DMAPP), two major building blocks of isoprenoid compounds. Catalyzes the conversion of 4-diphosphocytidyl-2-C-methyl-D-erythritol 2-phosphate (CDP-ME2P) to 2-C-methyl-D-erythritol 2,4-cyclodiphosphate (ME-CPP) with a corresponding release of cytidine 5-monophosphate (CMP). The polypeptide is 2-C-methyl-D-erythritol 2,4-cyclodiphosphate synthase (Pseudomonas fluorescens (strain Pf0-1)).